A 668-amino-acid polypeptide reads, in one-letter code: MPAIQNEIAQLTAELNQHNYRYYVDDSPSIPDAEYDRLLNRLKALETEHPEFCRPDSPTQRVGGEALAKFEQIKHLKPMLSLDNVFDEQEFTAFNQRIVDKTGKDLSYCCEPKLDGLAVSIVYRDGVFERAATRGDGQTGEDITENVRTIKSIPLTLRGDNFPPLVEVRGEVIMPHKAFDALNERARVKGDKLFVNPRNAAAGSLRQLDSKITASRALGFYAYALGVVEPETWELADSHYGQLEQLRSWGVPVSQEVRGCETVAEVMAYYYDIQQRRSSLEFEIDGVVVKVNQIAHQLSLGFVAKAPRWATAFKFPAQEEMTLLEGVDFQVGRTGAVTPVARLKPVFVGGVTVSNATLHNADEIARLGVKVGDTIIIRRAGDVIPQIVAVVAEKRPDDAKDIVFPAHCPVCDSEVERVEGEAVTRCTGGLFCEAQRKEAIKHFASRKALDIDGMGDKVVEQLIDKELVESPADLFRLTASAMTMLERMGMKSATKLVAAIEVAKQTTFARFLYALGIREVGEATAANLAAYFKTLEALKAASAEEFIKVDDVGTIVAAHLAHFLAQPHNLEVIDKLVEAGIHWPAVEEVAEEDLSLKGQTWVLTGTLTQLNRNDAKAKLQALGAKVAGSVSKNTDCLVAGAAAGSKLTKAQELGVKVIDEEALIAILS.

NAD(+) contacts are provided by residues 32-36 (DAEYD), 81-82 (SL), and E111. The active-site N6-AMP-lysine intermediate is the K113. Positions 134, 171, 290, and 314 each coordinate NAD(+). Zn(2+) is bound by residues C408, C411, C426, and C432. The BRCT domain maps to 591–668 (EEDLSLKGQT…DEEALIAILS (78 aa)).

It belongs to the NAD-dependent DNA ligase family. LigA subfamily. It depends on Mg(2+) as a cofactor. The cofactor is Mn(2+).

It carries out the reaction NAD(+) + (deoxyribonucleotide)n-3'-hydroxyl + 5'-phospho-(deoxyribonucleotide)m = (deoxyribonucleotide)n+m + AMP + beta-nicotinamide D-nucleotide.. Its function is as follows. DNA ligase that catalyzes the formation of phosphodiester linkages between 5'-phosphoryl and 3'-hydroxyl groups in double-stranded DNA using NAD as a coenzyme and as the energy source for the reaction. It is essential for DNA replication and repair of damaged DNA. The sequence is that of DNA ligase from Shewanella pealeana (strain ATCC 700345 / ANG-SQ1).